The primary structure comprises 466 residues: Uronate isomerase (466 aa).

This sequence belongs to the metallo-dependent hydrolases superfamily. Uronate isomerase family.

It catalyses the reaction D-glucuronate = D-fructuronate. It carries out the reaction aldehydo-D-galacturonate = keto-D-tagaturonate. It participates in carbohydrate metabolism; pentose and glucuronate interconversion. This Clostridium perfringens (strain 13 / Type A) protein is Uronate isomerase.